The following is a 221-amino-acid chain: Octanoyltransferase (221 aa).

In terms of domain architecture, BPL/LPL catalytic spans 35–221 (ESYENRIIFC…RELLAALLSK (187 aa)). Substrate contacts are provided by residues 80 to 87 (RGGDITYH), 152 to 154 (AIG), and 165 to 167 (GLA). The active-site Acyl-thioester intermediate is C183.

It belongs to the LipB family.

It localises to the cytoplasm. It carries out the reaction octanoyl-[ACP] + L-lysyl-[protein] = N(6)-octanoyl-L-lysyl-[protein] + holo-[ACP] + H(+). The protein operates within protein modification; protein lipoylation via endogenous pathway; protein N(6)-(lipoyl)lysine from octanoyl-[acyl-carrier-protein]: step 1/2. Its function is as follows. Catalyzes the transfer of endogenously produced octanoic acid from octanoyl-acyl-carrier-protein onto the lipoyl domains of lipoate-dependent enzymes. Lipoyl-ACP can also act as a substrate although octanoyl-ACP is likely to be the physiological substrate. This is Octanoyltransferase from Bacteroides fragilis (strain YCH46).